The following is a 287-amino-acid chain: GPN-loop GTPase 3 (287 aa).

Position 12–17 (12–17 (GAGKST)) interacts with GTP. Positions 69-71 (GPN) match the Gly-Pro-Asn (GPN)-loop; involved in dimer interface motif. A GTP-binding site is contributed by 172 to 175 (SKMD).

The protein belongs to the GPN-loop GTPase family. In terms of assembly, heterodimers with GPN1 or GPN2. Binds to RNA polymerase II (RNAPII).

Its function is as follows. Small GTPase required for proper nuclear import of RNA polymerase II and III (RNAPII and RNAPIII). May act at an RNAP assembly step prior to nuclear import. This Cryptococcus neoformans var. neoformans serotype D (strain B-3501A) (Filobasidiella neoformans) protein is GPN-loop GTPase 3.